We begin with the raw amino-acid sequence, 532 residues long: Cytokinin dehydrogenase 1 (532 aa).

Positions 1–17 (MAAIYLLIAALIASSHA) are cleaved as a signal peptide. Asparagine 52 and asparagine 63 each carry an N-linked (GlcNAc...) asparagine glycan. One can recognise an FAD-binding PCMH-type domain in the interval 65–244 (TAALPAAVLF…TRARVAVEPA (180 aa)). FAD is bound by residues phenylalanine 100, glycine 102, arginine 103, and glycine 104. Histidine 105 is subject to Pros-8alpha-FAD histidine. Serine 106 and glutamine 110 together coordinate FAD. Asparagine 133 carries N-linked (GlcNAc...) asparagine glycosylation. Positions 168, 173, 179, 183, and 234 each coordinate FAD. N-linked (GlcNAc...) asparagine glycans are attached at residues asparagine 321 and asparagine 432. 3 residues coordinate FAD: tyrosine 490, serine 525, and glutamine 528.

The protein belongs to the oxygen-dependent FAD-linked oxidoreductase family. In terms of assembly, monomer. FAD serves as cofactor.

The protein localises to the secreted. It localises to the extracellular space. The enzyme catalyses N(6)-dimethylallyladenine + A + H2O = 3-methyl-2-butenal + adenine + AH2. In terms of biological role, catalyzes the oxidation of cytokinins, a family of N(6)-substituted adenine derivatives that are plant hormones, where the substituent is an isopentenyl group. The sequence is that of Cytokinin dehydrogenase 1 (CKX1) from Oryza sativa subsp. japonica (Rice).